Reading from the N-terminus, the 101-residue chain is Urease subunit beta (101 aa).

Belongs to the urease beta subunit family. As to quaternary structure, heterotrimer of UreA (gamma), UreB (beta) and UreC (alpha) subunits. Three heterotrimers associate to form the active enzyme.

The protein resides in the cytoplasm. The enzyme catalyses urea + 2 H2O + H(+) = hydrogencarbonate + 2 NH4(+). It participates in nitrogen metabolism; urea degradation; CO(2) and NH(3) from urea (urease route): step 1/1. The protein is Urease subunit beta of Rhizobium etli (strain ATCC 51251 / DSM 11541 / JCM 21823 / NBRC 15573 / CFN 42).